The chain runs to 392 residues: S-adenosylmethionine decarboxylase proenzyme (392 aa).

Active-site residues include Glu43 and Glu46. Ser100 acts as the Schiff-base intermediate with substrate; via pyruvic acid in catalysis. Ser100 bears the Pyruvic acid (Ser); by autocatalysis mark. Cys114 (proton donor; for catalytic activity) is an active-site residue. Active-site proton acceptor; for processing activity residues include Ser264 and His277.

It belongs to the eukaryotic AdoMetDC family. Pyruvate is required as a cofactor. In terms of processing, is synthesized initially as an inactive proenzyme. Formation of the active enzyme involves a self-maturation process in which the active site pyruvoyl group is generated from an internal serine residue via an autocatalytic post-translational modification. Two non-identical subunits are generated from the proenzyme in this reaction, and the pyruvate is formed at the N-terminus of the alpha chain, which is derived from the carboxyl end of the proenzyme. The post-translation cleavage follows an unusual pathway, termed non-hydrolytic serinolysis, in which the side chain hydroxyl group of the serine supplies its oxygen atom to form the C-terminus of the beta chain, while the remainder of the serine residue undergoes an oxidative deamination to produce ammonia and the pyruvoyl group blocking the N-terminus of the alpha chain.

It carries out the reaction S-adenosyl-L-methionine + H(+) = S-adenosyl 3-(methylsulfanyl)propylamine + CO2. It functions in the pathway amine and polyamine biosynthesis; S-adenosylmethioninamine biosynthesis; S-adenosylmethioninamine from S-adenosyl-L-methionine: step 1/1. This Leishmania infantum protein is S-adenosylmethionine decarboxylase proenzyme.